Consider the following 59-residue polypeptide: Small ribosomal subunit protein bS21 (59 aa).

Residues Glu36–Phe59 form a disordered region. Over residues Val43 to Phe59 the composition is skewed to basic residues.

This sequence belongs to the bacterial ribosomal protein bS21 family.

The polypeptide is Small ribosomal subunit protein bS21 (Alkaliphilus oremlandii (strain OhILAs) (Clostridium oremlandii (strain OhILAs))).